A 393-amino-acid polypeptide reads, in one-letter code: Dual-specificity RNA methyltransferase RlmN (393 aa).

Glutamate 114 functions as the Proton acceptor in the catalytic mechanism. A Radical SAM core domain is found at 120-359 (EDDRATLCVS…VIVRKTRGDD (240 aa)). Residues cysteine 127 and cysteine 364 are joined by a disulfide bond. The [4Fe-4S] cluster site is built by cysteine 134, cysteine 138, and cysteine 141. S-adenosyl-L-methionine-binding positions include 188-189 (GE), serine 220, 242-244 (SLH), and asparagine 321. The S-methylcysteine intermediate role is filled by cysteine 364.

Belongs to the radical SAM superfamily. RlmN family. The cofactor is [4Fe-4S] cluster.

It is found in the cytoplasm. The catalysed reaction is adenosine(2503) in 23S rRNA + 2 reduced [2Fe-2S]-[ferredoxin] + 2 S-adenosyl-L-methionine = 2-methyladenosine(2503) in 23S rRNA + 5'-deoxyadenosine + L-methionine + 2 oxidized [2Fe-2S]-[ferredoxin] + S-adenosyl-L-homocysteine. The enzyme catalyses adenosine(37) in tRNA + 2 reduced [2Fe-2S]-[ferredoxin] + 2 S-adenosyl-L-methionine = 2-methyladenosine(37) in tRNA + 5'-deoxyadenosine + L-methionine + 2 oxidized [2Fe-2S]-[ferredoxin] + S-adenosyl-L-homocysteine. In terms of biological role, specifically methylates position 2 of adenine 2503 in 23S rRNA and position 2 of adenine 37 in tRNAs. m2A2503 modification seems to play a crucial role in the proofreading step occurring at the peptidyl transferase center and thus would serve to optimize ribosomal fidelity. This chain is Dual-specificity RNA methyltransferase RlmN, found in Actinobacillus pleuropneumoniae serotype 3 (strain JL03).